A 399-amino-acid polypeptide reads, in one-letter code: Elongation factor Tu (399 aa).

The tr-type G domain maps to 10 to 204 (KPHVNIGTIG…AVDASIPEPE (195 aa)). Residues 19-26 (GHVDHGKT) form a G1 region. 19-26 (GHVDHGKT) is a GTP binding site. Residue Thr-26 participates in Mg(2+) binding. A G2 region spans residues 60–64 (GITIN). Residues 81–84 (DCPG) form a G3 region. GTP is bound by residues 81 to 85 (DCPGH) and 136 to 139 (NKCD). The tract at residues 136–139 (NKCD) is G4. The interval 174–176 (SGL) is G5.

It belongs to the TRAFAC class translation factor GTPase superfamily. Classic translation factor GTPase family. EF-Tu/EF-1A subfamily. In terms of assembly, monomer.

The protein resides in the cytoplasm. The catalysed reaction is GTP + H2O = GDP + phosphate + H(+). Functionally, GTP hydrolase that promotes the GTP-dependent binding of aminoacyl-tRNA to the A-site of ribosomes during protein biosynthesis. The protein is Elongation factor Tu of Prochlorococcus marinus (strain MIT 9515).